The sequence spans 224 residues: Flagellar L-ring protein (224 aa).

An N-terminal signal peptide occupies residues 1–15 (MARYLVLAVALLLAA). A lipid anchor (N-palmitoyl cysteine) is attached at Cys-16. Cys-16 is lipidated: S-diacylglycerol cysteine.

It belongs to the FlgH family. As to quaternary structure, the basal body constitutes a major portion of the flagellar organelle and consists of four rings (L,P,S, and M) mounted on a central rod.

It is found in the cell outer membrane. Its subcellular location is the bacterial flagellum basal body. Assembles around the rod to form the L-ring and probably protects the motor/basal body from shearing forces during rotation. In Shewanella baltica (strain OS185), this protein is Flagellar L-ring protein.